A 780-amino-acid polypeptide reads, in one-letter code: Lon protease (780 aa).

Residues 11 to 204 form the Lon N-terminal domain; that stretch reads IPVLPLRDVV…RLMAIMESEI (194 aa). 356 to 363 lines the ATP pocket; that stretch reads GPPGVGKT. The Lon proteolytic domain occupies 592–773; the sequence is KNQIGQVIGL…KEVLNLSLEN (182 aa). Catalysis depends on residues Ser-679 and Lys-722.

It belongs to the peptidase S16 family. In terms of assembly, homohexamer. Organized in a ring with a central cavity.

Its subcellular location is the cytoplasm. It catalyses the reaction Hydrolysis of proteins in presence of ATP.. Functionally, ATP-dependent serine protease that mediates the selective degradation of mutant and abnormal proteins as well as certain short-lived regulatory proteins. Required for cellular homeostasis and for survival from DNA damage and developmental changes induced by stress. Degrades polypeptides processively to yield small peptide fragments that are 5 to 10 amino acids long. Binds to DNA in a double-stranded, site-specific manner. This is Lon protease from Buchnera aphidicola subsp. Baizongia pistaciae (strain Bp).